The primary structure comprises 154 residues: Ascorbate-specific PTS system EIIA component (154 aa).

The PTS EIIA type-2 domain occupies 6–150 (SLAVNKSIRL…QEVLDLIDRT (145 aa)). His68 serves as the catalytic Tele-phosphohistidine intermediate. Phosphohistidine is present on His68.

It localises to the cytoplasm. In terms of biological role, the phosphoenolpyruvate-dependent sugar phosphotransferase system (sugar PTS), a major carbohydrate active transport system, catalyzes the phosphorylation of incoming sugar substrates concomitantly with their translocation across the cell membrane. The enzyme II UlaABC PTS system is involved in ascorbate transport. The chain is Ascorbate-specific PTS system EIIA component (ulaC) from Shigella dysenteriae serotype 1 (strain Sd197).